The sequence spans 431 residues: Peroxisomal biogenesis factor 3 (431 aa).

Residues 1–10 lie on the Peroxisomal side of the membrane; the sequence is MDFFRRHQKK. Residues 11-28 form a helical membrane-spanning segment; sequence VLALVGVALSSYLFIDYV. Topologically, residues 29–431 are cytoplasmic; that stretch reads KKKFFEIQGR…VVYSSFDWAL (403 aa). The segment at 95–126 is disordered; the sequence is TDRVLALESSTSSSATAQTVPTMTSGATEEGE. Positions 112 to 121 are enriched in polar residues; the sequence is QTVPTMTSGA.

This sequence belongs to the peroxin-3 family.

The protein resides in the peroxisome membrane. In terms of biological role, involved in peroxisome biosynthesis. Seems to directly or indirectly sequesters components of the peroxisome biogenesis machinery. This is Peroxisomal biogenesis factor 3 (PEX3) from Yarrowia lipolytica (strain CLIB 122 / E 150) (Yeast).